Reading from the N-terminus, the 322-residue chain is Probable uridine nucleosidase 2 (322 aa).

Catalysis depends on residues D14 and H246.

This sequence belongs to the IUNH family. In terms of assembly, component of the NSH heterocomplex made of URH1/NSH1 and URH2/NSH2 which exhibits strong xanthosine nucleosidase activity. Interacts with URH1. As to expression, expressed in roots, seedlings and flowers.

The protein resides in the cytoplasm. The protein localises to the cytosol. The catalysed reaction is uridine + H2O = D-ribose + uracil. It carries out the reaction inosine + H2O = hypoxanthine + D-ribose. It catalyses the reaction xanthosine + H2O = D-ribose + xanthine. Involved in pyrimidine breakdown, especially in response to dark stress. In the presence of URH1, exhibits efficient inosine and xanthosine hydrolytic activities. Support inosine breakdown especially during the late phase of senescence. The chain is Probable uridine nucleosidase 2 from Arabidopsis thaliana (Mouse-ear cress).